A 190-amino-acid polypeptide reads, in one-letter code: Potassium-transporting ATPase KdpC subunit (190 aa).

Residues 13–33 (VGFLLLTLVCGVVYPGIVTII) traverse the membrane as a helical segment.

The protein belongs to the KdpC family. The system is composed of three essential subunits: KdpA, KdpB and KdpC.

The protein localises to the cell membrane. In terms of biological role, part of the high-affinity ATP-driven potassium transport (or Kdp) system, which catalyzes the hydrolysis of ATP coupled with the electrogenic transport of potassium into the cytoplasm. This subunit acts as a catalytic chaperone that increases the ATP-binding affinity of the ATP-hydrolyzing subunit KdpB by the formation of a transient KdpB/KdpC/ATP ternary complex. The protein is Potassium-transporting ATPase KdpC subunit of Listeria welshimeri serovar 6b (strain ATCC 35897 / DSM 20650 / CCUG 15529 / CIP 8149 / NCTC 11857 / SLCC 5334 / V8).